A 69-amino-acid polypeptide reads, in one-letter code: Cytochrome c oxidase subunit 8A, mitochondrial (69 aa).

The N-terminal 25 residues, 1–25 (MSVLTPLLLRGLTGSARRLPVPRAK), are a transit peptide targeting the mitochondrion. Residues 2–19 (SVLTPLLLRGLTGSARRL) carry the SIFI-degron motif. Topologically, residues 26–36 (IHSLPPEEKLG) are mitochondrial matrix. Residues 37–60 (IMELAVGLTSCFVTFLLPAGWILS) traverse the membrane as a helical segment. Topologically, residues 61–69 (HLETYRRPE) are mitochondrial intermembrane.

It belongs to the cytochrome c oxidase VIII family. Component of the cytochrome c oxidase (complex IV, CIV), a multisubunit enzyme composed of 14 subunits. The complex is composed of a catalytic core of 3 subunits MT-CO1, MT-CO2 and MT-CO3, encoded in the mitochondrial DNA, and 11 supernumerary subunits COX4I, COX5A, COX5B, COX6A, COX6B, COX6C, COX7A, COX7B, COX7C, COX8 and NDUFA4, which are encoded in the nuclear genome. The complex exists as a monomer or a dimer and forms supercomplexes (SCs) in the inner mitochondrial membrane with NADH-ubiquinone oxidoreductase (complex I, CI) and ubiquinol-cytochrome c oxidoreductase (cytochrome b-c1 complex, complex III, CIII), resulting in different assemblies (supercomplex SCI(1)III(2)IV(1) and megacomplex MCI(2)III(2)IV(2)). In response to mitochondrial stress, the precursor protein is ubiquitinated by the SIFI complex in the cytoplasm before mitochondrial import, leading to its degradation. Within the SIFI complex, UBR4 initiates ubiquitin chain that are further elongated or branched by KCMF1.

It localises to the mitochondrion inner membrane. It functions in the pathway energy metabolism; oxidative phosphorylation. Component of the cytochrome c oxidase, the last enzyme in the mitochondrial electron transport chain which drives oxidative phosphorylation. The respiratory chain contains 3 multisubunit complexes succinate dehydrogenase (complex II, CII), ubiquinol-cytochrome c oxidoreductase (cytochrome b-c1 complex, complex III, CIII) and cytochrome c oxidase (complex IV, CIV), that cooperate to transfer electrons derived from NADH and succinate to molecular oxygen, creating an electrochemical gradient over the inner membrane that drives transmembrane transport and the ATP synthase. Cytochrome c oxidase is the component of the respiratory chain that catalyzes the reduction of oxygen to water. Electrons originating from reduced cytochrome c in the intermembrane space (IMS) are transferred via the dinuclear copper A center (CU(A)) of subunit 2 and heme A of subunit 1 to the active site in subunit 1, a binuclear center (BNC) formed by heme A3 and copper B (CU(B)). The BNC reduces molecular oxygen to 2 water molecules using 4 electrons from cytochrome c in the IMS and 4 protons from the mitochondrial matrix. This is Cytochrome c oxidase subunit 8A, mitochondrial (COX8A) from Hylobates agilis (Agile gibbon).